We begin with the raw amino-acid sequence, 469 residues long: Glutamate--tRNA ligase 1 (469 aa).

The 'HIGH' region motif lies at 11–21 (PSPTGHLHLGG). The 'KMSKS' region motif lies at 238 to 242 (KLSKR). K241 contributes to the ATP binding site.

Belongs to the class-I aminoacyl-tRNA synthetase family. Glutamate--tRNA ligase type 1 subfamily. In terms of assembly, monomer.

The protein localises to the cytoplasm. The catalysed reaction is tRNA(Glu) + L-glutamate + ATP = L-glutamyl-tRNA(Glu) + AMP + diphosphate. Its function is as follows. Catalyzes the attachment of glutamate to tRNA(Glu) in a two-step reaction: glutamate is first activated by ATP to form Glu-AMP and then transferred to the acceptor end of tRNA(Glu). The sequence is that of Glutamate--tRNA ligase 1 from Ehrlichia canis (strain Jake).